The chain runs to 310 residues: Cysteine synthase (310 aa).

An N6-(pyridoxal phosphate)lysine modification is found at Lys46. Pyridoxal 5'-phosphate-binding positions include Asn76, 180 to 184, and Ser268; that span reads GTGGT.

This sequence belongs to the cysteine synthase/cystathionine beta-synthase family. As to quaternary structure, homodimer. Pyridoxal 5'-phosphate serves as cofactor.

It carries out the reaction O-acetyl-L-serine + hydrogen sulfide = L-cysteine + acetate. It functions in the pathway amino-acid biosynthesis; L-cysteine biosynthesis; L-cysteine from L-serine: step 2/2. The protein is Cysteine synthase (cysK) of Staphylococcus aureus (strain Mu50 / ATCC 700699).